The chain runs to 113 residues: MAAQKPVRHSVHVKKGDTVQVIAGKDKGTVGEVLQVFPKTSRVLVKGVNLRTKHVKPRQEGESGQIVVEEASIHSSNVQLYSTTQKVASRVAYTFTEDGRKVRKLKKTGEIID.

This sequence belongs to the universal ribosomal protein uL24 family. In terms of assembly, part of the 50S ribosomal subunit.

One of two assembly initiator proteins, it binds directly to the 5'-end of the 23S rRNA, where it nucleates assembly of the 50S subunit. Functionally, one of the proteins that surrounds the polypeptide exit tunnel on the outside of the subunit. This Synechococcus elongatus (strain ATCC 33912 / PCC 7942 / FACHB-805) (Anacystis nidulans R2) protein is Large ribosomal subunit protein uL24.